Here is a 251-residue protein sequence, read N- to C-terminus: MNEAVKTLDGWFCLHDFRSIDWAAWRELNPGNQELMLNELSHFLSDMEITKNIGEGEHTIYSILGQKADLVFFTLRDSLEALNEVENRFNKLAIADYLLPTYSYISVVELSNYLASHMAGGEDPYQNKGVRARLYPALPPKKHICFYPMSKKRDGADNWYMLPMEERQQLIRDHGLIGRSYAGKVQQIIGGSIGFDDYEWGVTLFSDDALEFKRIVTEMRFDEASARYAEFGSFFIGNLLLSEQLSKLFTI.

Residues R133, 147–151 (YPMSK), H174, Q187, and S225 contribute to the Fe-coproporphyrin III site. The active site involves Y147.

The protein belongs to the ChdC family. Type 1 subfamily. The cofactor is Fe-coproporphyrin III.

The catalysed reaction is Fe-coproporphyrin III + 2 H2O2 + 2 H(+) = heme b + 2 CO2 + 4 H2O. It carries out the reaction Fe-coproporphyrin III + H2O2 + H(+) = harderoheme III + CO2 + 2 H2O. The enzyme catalyses harderoheme III + H2O2 + H(+) = heme b + CO2 + 2 H2O. It functions in the pathway porphyrin-containing compound metabolism; protoheme biosynthesis. Its function is as follows. Involved in coproporphyrin-dependent heme b biosynthesis. Catalyzes the decarboxylation of Fe-coproporphyrin III (coproheme) to heme b (protoheme IX), the last step of the pathway. The reaction occurs in a stepwise manner with a three-propionate intermediate. The polypeptide is Coproheme decarboxylase (Listeria monocytogenes serotype 4a (strain HCC23)).